The sequence spans 158 residues: Small ribosomal subunit protein uS9 (158 aa).

Residues 1–20 form a disordered region; it reads MTEAVETETVEPTTDEATAA. Residues 10–20 show a composition bias toward low complexity; sequence VEPTTDEATAA.

This sequence belongs to the universal ribosomal protein uS9 family.

This chain is Small ribosomal subunit protein uS9, found in Mycobacterium sp. (strain JLS).